We begin with the raw amino-acid sequence, 408 residues long: CinA-like protein (408 aa).

Belongs to the CinA family.

This Thermotoga sp. (strain RQ2) protein is CinA-like protein.